Here is a 968-residue protein sequence, read N- to C-terminus: RNA polymerase-associated protein RapA (968 aa).

Residues D164–N334 form the Helicase ATP-binding domain. D177–T184 lines the ATP pocket. The DEAH box motif lies at D280–H283. One can recognise a Helicase C-terminal domain in the interval R490–G662.

This sequence belongs to the SNF2/RAD54 helicase family. RapA subfamily. Interacts with the RNAP. Has a higher affinity for the core RNAP than for the holoenzyme. Its ATPase activity is stimulated by binding to RNAP.

Functionally, transcription regulator that activates transcription by stimulating RNA polymerase (RNAP) recycling in case of stress conditions such as supercoiled DNA or high salt concentrations. Probably acts by releasing the RNAP, when it is trapped or immobilized on tightly supercoiled DNA. Does not activate transcription on linear DNA. Probably not involved in DNA repair. The sequence is that of RNA polymerase-associated protein RapA from Shigella boydii serotype 18 (strain CDC 3083-94 / BS512).